The following is a 964-amino-acid chain: Fanconi-associated nuclease 1 homolog (964 aa).

The interval 31–56 is disordered; sequence SRSLQDDAADAEREAAAGGSSSGGGD. The UBZ4-type zinc-finger motif lies at 63–92; the sequence is WVACPVCGESIRGTDYCVNTHLDICLTRGT. Zn(2+) contacts are provided by cysteine 66, cysteine 69, histidine 83, and cysteine 87. Mn(2+) is bound by residues glutamate 786, aspartate 907, glutamate 926, and valine 927. One can recognise a VRR-NUC domain in the interval 844-958; that stretch reads GIAEEILISS…GFDVEVCKVS (115 aa).

This sequence belongs to the FAN1 family. Requires Mn(2+) as cofactor. It depends on Mg(2+) as a cofactor.

The catalysed reaction is Hydrolytically removes 5'-nucleotides successively from the 3'-hydroxy termini of 3'-hydroxy-terminated oligonucleotides.. Nuclease required for the repair of DNA interstrand cross-links (ICL). Acts as a 5'-3' exonuclease that anchors at a cut end of DNA and cleaves DNA successively at every third nucleotide, allowing to excise an ICL from one strand through flanking incisions. This Oryza sativa subsp. japonica (Rice) protein is Fanconi-associated nuclease 1 homolog.